The primary structure comprises 327 residues: ABC transporter periplasmic-binding protein YphF (327 aa).

Positions 1–26 (MPTKMRTTRNLLLMATLLGSALFARA) are cleaved as a signal peptide.

Belongs to the bacterial solute-binding protein 2 family.

Its subcellular location is the periplasm. In terms of biological role, probably part of the binding-protein-dependent transport system YphDEF. The chain is ABC transporter periplasmic-binding protein YphF (yphF) from Escherichia coli (strain K12).